Here is a 346-residue protein sequence, read N- to C-terminus: Small ribosomal subunit biogenesis GTPase RsgA (346 aa).

The interval Met-1 to Lys-26 is disordered. Polar residues predominate over residues Thr-7–Lys-20. Residues Glu-103 to Phe-271 enclose the CP-type G domain. GTP is bound by residues Asn-159–Asp-162 and Gly-213–Ser-221. Zn(2+)-binding residues include Cys-295, Cys-300, His-302, and Cys-308.

The protein belongs to the TRAFAC class YlqF/YawG GTPase family. RsgA subfamily. In terms of assembly, monomer. Associates with 30S ribosomal subunit, binds 16S rRNA. Zn(2+) is required as a cofactor.

Its subcellular location is the cytoplasm. In terms of biological role, one of several proteins that assist in the late maturation steps of the functional core of the 30S ribosomal subunit. Helps release RbfA from mature subunits. May play a role in the assembly of ribosomal proteins into the subunit. Circularly permuted GTPase that catalyzes slow GTP hydrolysis, GTPase activity is stimulated by the 30S ribosomal subunit. This Haemophilus influenzae (strain 86-028NP) protein is Small ribosomal subunit biogenesis GTPase RsgA.